A 1005-amino-acid chain; its full sequence is EvC complex member EVC (1005 aa).

The Extracellular portion of the chain corresponds to 1–21 (MTCTKDARLQLGREALQAAPT). The helical transmembrane segment at 22-42 (LLVPAVLLGGVLGLGLGLWLG) threads the bilayer. Over 43 to 1005 (CRASHLRARL…SKILQKGSNL (963 aa)) the chain is Cytoplasmic. Disordered regions lie at residues 58–98 (KRLL…EVCE), 150–180 (HQPAEASPASSLGSLSQAGKEDGSSSSSMRS), 834–853 (PSLESQTADGTHGASQGVQQ), and 914–1005 (LPEN…GSNL). Polar residues-rich tracts occupy residues 157 to 166 (PASSLGSLSQ) and 835 to 853 (SLESQTADGTHGASQGVQQ). A compositionally biased stretch (basic and acidic residues) spans 939-956 (PPREREDLGTPNDDHLAL). Positions 993 to 1005 (ESTSKILQKGSNL) are enriched in polar residues.

As to quaternary structure, component of the EvC complex composed of EFCAB7, IQCE, EVC2 and EVC; built from two subcomplexes, EVC2:EVC and EFCAB7:IQCE. Interacts with EVC2. Interacts with EFCAB7. Interacts with IQCE. Expressed in the developing skeleton and the orofacial region. Expression is general to all the cartilaginous components of the skeleton, including the chondrocranium, the vertebrae, the rib cage, and the axial skeleton by 15.5 dpc.

The protein localises to the cell membrane. It is found in the cytoplasm. Its subcellular location is the cytoskeleton. The protein resides in the cilium basal body. It localises to the cell projection. The protein localises to the cilium. It is found in the cilium membrane. In terms of biological role, component of the EvC complex that positively regulates ciliary Hedgehog (Hh) signaling. Involved in endochondral growth and skeletal development. The polypeptide is EvC complex member EVC (Evc) (Mus musculus (Mouse)).